Here is a 171-residue protein sequence, read N- to C-terminus: S-ribosylhomocysteine lyase (171 aa).

Residues His54, His58, and Cys128 each contribute to the Fe cation site.

The protein belongs to the LuxS family. In terms of assembly, homodimer. Requires Fe cation as cofactor.

It catalyses the reaction S-(5-deoxy-D-ribos-5-yl)-L-homocysteine = (S)-4,5-dihydroxypentane-2,3-dione + L-homocysteine. In terms of biological role, involved in the synthesis of autoinducer 2 (AI-2) which is secreted by bacteria and is used to communicate both the cell density and the metabolic potential of the environment. The regulation of gene expression in response to changes in cell density is called quorum sensing. Catalyzes the transformation of S-ribosylhomocysteine (RHC) to homocysteine (HC) and 4,5-dihydroxy-2,3-pentadione (DPD). The polypeptide is S-ribosylhomocysteine lyase (Citrobacter koseri (strain ATCC BAA-895 / CDC 4225-83 / SGSC4696)).